The sequence spans 140 residues: Lysozyme E (140 aa).

The N-terminal stretch at M1–G18 is a signal peptide. Residues R19–F140 form the C-type lysozyme domain. 4 cysteine pairs are disulfide-bonded: C24-C139, C45-C129, C80-C96, and C92-C110. Residues E50 and D68 contribute to the active site.

Belongs to the glycosyl hydrolase 22 family. Found in the midgut.

The enzyme catalyses Hydrolysis of (1-&gt;4)-beta-linkages between N-acetylmuramic acid and N-acetyl-D-glucosamine residues in a peptidoglycan and between N-acetyl-D-glucosamine residues in chitodextrins.. In terms of biological role, unlikely to play an active role in the humoral immune defense. May have a function in the digestion of bacteria in the food. This Drosophila melanogaster (Fruit fly) protein is Lysozyme E (LysE).